We begin with the raw amino-acid sequence, 443 residues long: Mevalonate kinase (443 aa).

ATP is bound by residues Lys12, Ser138, and 143-149 (GAGLGSS). Mg(2+)-binding residues include Ser149 and Glu191. Asp202 serves as the catalytic Proton acceptor.

Belongs to the GHMP kinase family. Mevalonate kinase subfamily. In terms of assembly, homodimer. Mg(2+) is required as a cofactor.

Its subcellular location is the cytoplasm. It localises to the cytosol. The enzyme catalyses (R)-mevalonate + ATP = (R)-5-phosphomevalonate + ADP + H(+). The protein operates within isoprenoid biosynthesis; isopentenyl diphosphate biosynthesis via mevalonate pathway; isopentenyl diphosphate from (R)-mevalonate: step 1/3. With respect to regulation, farnesyl pyrophosphate and geranyl pyrophosphate inhibit mevalonate kinase by binding competitively at the ATP-binding site. Mevalonate kinase; part of the second module of ergosterol biosynthesis pathway that includes the middle steps of the pathway. ERG12 converts mevalonate into 5-phosphomevalonate. The second module is carried out in the vacuole and involves the formation of farnesyl diphosphate, which is also an important intermediate in the biosynthesis of ubiquinone, dolichol, heme and prenylated proteins. Activity by the mevalonate kinase ERG12 first converts mevalonate into 5-phosphomevalonate. 5-phosphomevalonate is then further converted to 5-diphosphomevalonate by the phosphomevalonate kinase ERG8. The diphosphomevalonate decarboxylase MVD1/ERG19 then produces isopentenyl diphosphate. The isopentenyl-diphosphate delta-isomerase IDI1 then catalyzes the 1,3-allylic rearrangement of the homoallylic substrate isopentenyl (IPP) to its highly electrophilic allylic isomer, dimethylallyl diphosphate (DMAPP). Finally the farnesyl diphosphate synthase ERG20 catalyzes the sequential condensation of isopentenyl pyrophosphate with dimethylallyl pyrophosphate, and then with the resultant geranylpyrophosphate to the ultimate product farnesyl pyrophosphate. The polypeptide is Mevalonate kinase (Saccharomyces cerevisiae (strain ATCC 204508 / S288c) (Baker's yeast)).